A 433-amino-acid polypeptide reads, in one-letter code: Acetyl-CoA-benzylalcohol acetyltransferase (433 aa).

Active-site proton acceptor residues include His152 and Asp377.

This sequence belongs to the plant acyltransferase family.

It catalyses the reaction benzyl alcohol + acetyl-CoA = benzyl acetate + CoA. The catalysed reaction is (E)-cinnamyl alcohol + acetyl-CoA = (E)-cinnamyl acetate + CoA. Its function is as follows. Involved in the biosynthesis of benzyl acetate, a major constituent of the floral scent. Can use benzylalcohol, cinnamylalcohol, 3-cis-hexene-1-ol or heptanol as substrates. Has some activity with 2-phenylethanol and 2-naphtalene-ethanol. The sequence is that of Acetyl-CoA-benzylalcohol acetyltransferase (BEAT) from Clarkia breweri (Fairy fans).